We begin with the raw amino-acid sequence, 521 residues long: Ribonuclease Y (521 aa).

A helical transmembrane segment spans residues 1-21; sequence MFFIEHPFVYLGLDLIVGCLI. The 61-residue stretch at 211 to 271 folds into the KH domain; sequence TVSMVPLPSD…VRREVARLAL (61 aa). Residues 337–430 enclose the HD domain; the sequence is VLQHSLEVAF…VQAADALSGA (94 aa).

It belongs to the RNase Y family.

It localises to the cell membrane. Its function is as follows. Endoribonuclease that initiates mRNA decay. This Desulfotalea psychrophila (strain LSv54 / DSM 12343) protein is Ribonuclease Y.